A 382-amino-acid chain; its full sequence is MKIIIAPDSFKESLSALEAAEAIERGFKSVFPGADYRKLPVADGGEGTVQSLVDATNGRIIEQVVTGPLGEPVRAFFGMMGDGRTAVIEMAAASGLHLVPVDKRNPLITTTRGTGELIGAALDAGAERLIIGIGGSATNDGGAGMIQALGGRLLDNSGSEIGPGGGALSQLASIDVSGLDSRLRNVKLEVACDVDNPLTGPKGATAVFGPQKGATADMLDVLDQNVSHFADMAEKALGSTFRDTEGAGAAGGLGWSLLTYLQADLKRGIDIVLEAVDFESIVQDADLVITGEGRIDSQTVHGKTPIGVAKAAKSYDVPVIGIAGSISRDSNAVYQHGIDALFSIVPGAVPLEDAFEHAAEYMERTARDIAASIKLAKTMFLI.

It belongs to the glycerate kinase type-1 family.

It carries out the reaction (R)-glycerate + ATP = (2R)-3-phosphoglycerate + ADP + H(+). This Bacillus subtilis (strain 168) protein is Glycerate kinase (glxK).